The sequence spans 1095 residues: Tyrosine-sulfated glycopeptide receptor 1 (1095 aa).

Residues 23–43 (PHMVLFVLLYVLSISVFFLTV) traverse the membrane as a helical segment. 2 N-linked (GlcNAc...) asparagine glycosylation sites follow: asparagine 62 and asparagine 73. LRR repeat units lie at residues 91–115 (ENRV…VLDL), 116–139 (QRLS…FLSA), 141–165 (DQLL…SFGN), 170–195 (IFPI…VFLQ), 197–221 (AFNL…MCTA), 223–246 (PQLT…LSRC), 247–270 (SRLS…IYNL), 271–294 (PELE…ITRL), 295–318 (TKLT…IGKL), 320–342 (KLSS…LANC), 344–366 (KLVK…DFSR), 367–391 (FQSL…VYSC), 393–415 (MMTA…VLEL), 416–439 (ESLS…SILQ), 441–466 (CKKL…DFLR), 470–494 (FPSL…LIKL), 495–517 (QRVE…WLGT), 518–542 (LPDL…LFQL), and 566–589 (NPNN…IYIK). A glycan (N-linked (GlcNAc...) asparagine) is linked at asparagine 165. N-linked (GlcNAc...) asparagine glycosylation is found at asparagine 199, asparagine 204, and asparagine 207. Residue asparagine 258 is glycosylated (N-linked (GlcNAc...) asparagine). Residue asparagine 341 is glycosylated (N-linked (GlcNAc...) asparagine). Asparagine 377 is a glycosylation site (N-linked (GlcNAc...) asparagine). Asparagine 430 is a glycosylation site (N-linked (GlcNAc...) asparagine). Asparagine 569, asparagine 592, asparagine 616, asparagine 627, asparagine 640, asparagine 662, and asparagine 714 each carry an N-linked (GlcNAc...) asparagine glycan. LRR repeat units lie at residues 604–628 (LKVL…LSNL), 629–652 (TNLE…LTGL), and 654–677 (FLSY…QFDT). The chain crosses the membrane as a helical span at residues 721–741 (LVLGLFFGVSLILVLLALLVL). Residues threonine 792 and threonine 800 each carry the phosphothreonine modification. The Protein kinase domain occupies 803-1074 (FSQANIIGCG…PNIQQVVDWL (272 aa)). Residues 809–817 (IGCGGFGLV) and lysine 831 contribute to the ATP site. Phosphotyrosine is present on residues tyrosine 876 and tyrosine 916. Aspartate 929 (proton acceptor) is an active-site residue. Tyrosine 971 is modified (phosphotyrosine).

The protein belongs to the protein kinase superfamily. Ser/Thr protein kinase family. As to quaternary structure, homo- and heterodimers with PSKR1. Interacts (via C-terminus) with AHA1 and AHA2 (via the R-domain). In terms of processing, autophosphorylated. As to expression, expressed ubiquitously, including in the shoot apical meristem and in the elongation zone of the root meristem.

It localises to the cell membrane. It catalyses the reaction L-seryl-[protein] + ATP = O-phospho-L-seryl-[protein] + ADP + H(+). The catalysed reaction is L-threonyl-[protein] + ATP = O-phospho-L-threonyl-[protein] + ADP + H(+). Functionally, tyrosine-sulfated glycopeptide receptor with a serine/threonine-protein kinase activity. Regulates, in response to tyrosine-sulfated glycopeptide binding, a signaling cascade involved in cellular proliferation and plant growth. Not involved in PSK perception. Involved in plant immunity, with antagonistic effects on bacterial and fungal resistances. Mediates activation of the plasma membrane H(+)-ATPase by PSY1. Phosphorylates AHA2 at Thr-881. The sequence is that of Tyrosine-sulfated glycopeptide receptor 1 from Arabidopsis thaliana (Mouse-ear cress).